Consider the following 191-residue polypeptide: Protein Ves (191 aa).

Belongs to the Ves family.

The sequence is that of Protein Ves from Escherichia coli O7:K1 (strain IAI39 / ExPEC).